The following is a 214-amino-acid chain: Cytochrome c biogenesis ATP-binding export protein CcmA (214 aa).

Positions 8 to 212 constitute an ABC transporter domain; that stretch reads LYAADLACLK…PPTVLDLSEV (205 aa). 40 to 47 is an ATP binding site; the sequence is GPNGFGKT.

It belongs to the ABC transporter superfamily. CcmA exporter (TC 3.A.1.107) family. In terms of assembly, the complex is composed of two ATP-binding proteins (CcmA) and two transmembrane proteins (CcmB).

It is found in the cell inner membrane. The catalysed reaction is heme b(in) + ATP + H2O = heme b(out) + ADP + phosphate + H(+). Functionally, part of the ABC transporter complex CcmAB involved in the biogenesis of c-type cytochromes; once thought to export heme, this seems not to be the case, but its exact role is uncertain. Responsible for energy coupling to the transport system. The protein is Cytochrome c biogenesis ATP-binding export protein CcmA of Aromatoleum aromaticum (strain DSM 19018 / LMG 30748 / EbN1) (Azoarcus sp. (strain EbN1)).